The sequence spans 586 residues: MDDEETSEINSVQGRDEDVQLEDHSQAQGLQDRRVDAMEQAWNNAIQDELSPPPEEAFQDPLAIEGEGGNAPEAMVEDGLQDDTASEGSHPSSDMSLESPGSEDDSDLERLPRWMIPQNRLRSAVDMMVSQARNRDGGIAALLNRDNFLQRVRSMVFSQERRRSRTSEETSQEDVEQPEDPPPQQPPRPPIDIGFDTNLPAEHSYFGNHLSRVPGVDYLEVGSVHHMLIFLHQHILFPGEVLPFMIDGRMFDEDMPGLDGLIFGVGFPLMQPPEDNQLKLYGVTCQIYEKGESGRGLVFYKSRALQRIVINFDDIQGSPQYIARNPTSKCFSKVKILPEYFLPEPLQSVDMGSMARFRDIPSMRDKYRRFQLSTTNWPSDACQEYSFASIVERARQRLESQKIDTMPKCPIQLSFWLVRNLHLTEKMMRLTFLTDSVNTRLQLIKSTFTDESLFFCRYCNSSLAHCADLFAMSKHGVQTQYCNPDGYIHETNTVYRVMSHAIGYSGEPSTKFSWFPGYQWHIILCKFCAQHVGWEFKAVQPNLTPRVFFGLAGSSVRIGKASENTSFNGSPYVVRNMLRLISNEME.

Disordered regions lie at residues 1-114 and 158-194; these read MDDE…LPRW and SQER…IDIG. Residues 14–37 show a composition bias toward basic and acidic residues; that stretch reads GRDEDVQLEDHSQAQGLQDRRVDA. The span at 75–85 shows a compositional bias: acidic residues; that stretch reads MVEDGLQDDTA. Polar residues predominate over residues 86–96; the sequence is SEGSHPSSDMS. Positions 159-168 are enriched in basic and acidic residues; it reads QERRRSRTSE. The segment covering 170-179 has biased composition (acidic residues); sequence TSQEDVEQPE. Residues 180-190 are compositionally biased toward pro residues; the sequence is DPPPQQPPRPP. One can recognise a Lon N-terminal domain in the interval 226–452; it reads HMLIFLHQHI…LIKSTFTDES (227 aa). Residues 451–560 enclose the CULT domain; it reads ESLFFCRYCN…LAGSSVRIGK (110 aa). The Zn(2+) site is built by cysteine 456, cysteine 459, cysteine 525, and cysteine 528.

Belongs to the CRBN family. As to quaternary structure, likely a component of a DCX (DDB1-CUL4-X-box) protein ligase complex. May interact with pic/DDB1. Post-translationally, ubiquitinated.

Its subcellular location is the nucleus. The protein operates within protein modification; protein ubiquitination. In terms of biological role, substrate recognition component of a DCX (DDB1-CUL4-X-box) E3 protein ligase complex that mediates the ubiquitination and subsequent proteasomal degradation of target proteins. Has an essential role in mediating growth by negatively regulating insulin signaling. It also has a role in maintaining presynaptic function in the neuromuscular junction synapses of third-instar larvae. The polypeptide is Protein cereblon (Drosophila erecta (Fruit fly)).